The sequence spans 1053 residues: MKTMRKQIYKKAYWLLLPFLPLALANTFLVKEDSKNVTAYTPFATPITDSKSDLVSLAQLDSSYQIADQTIHNTNLFVLFKSRDVKVKYESSGSNNISFDSTSQGEKPSYVVEFTNSTNIGIKWTMVKKYQLDVPNVSSDMNQVLKNLILEQPLTKYTLNSSLAKEKGKTQREVHLGSGQANQWTSQRNQHDLNNNPSPNASTGFKLTTGNAYRKLSESWPIYEPIDGTKQGKGKDSSGWSSTEENEAKNDAPSVSGGGSSSGTFNKYLNTKQALESIGILFDDQTPRNVITQLYYASTSKLAVTNNHIVVMGNSFLPSMWYWVVERSAQENASNKPTWFANTNLDWGEDKQKQFVENQLGYKETTSTNSHNFHSKSFTQPAYLISGIDSVNDQIIFSGFKAGSVGYDSSSSSSSSSSSSTKDQALAWSTTTSLDSKTGYKDLVTNDTGLNGPINGSFSIQDTFSFVVPYSGNHTNNGTTGPIKTAYPVKKDQKSTVKINSLINATPLNSYGDEGIGVFDALGLNYNFKSNQERLPSRTDQIFVYGIVSPNELRSAKSSADSTGSDTKVNWSNTQSRYLPVPYNYSEGIIDADGFKRPENRGASVTTFSGLKSIAPDGFANSIANFSVGLKAGIDPNPVMSGKKANYGAVVLTRGGVVRLNFNPGNDSLLSTTDNNIAPISFSFTPFTAAESAVDLTTFKEVTYNQESGLWSYIFDSSLKPSHDGKQTPVTDNMGFSVITVSRTGIELNQDQATTTLDVAPSALAVQSGIQSTTQTLTGVLPLSEEFSAVIAKDSDQNKIDIYKNNNGLFEIDTQLSNSVATNNGGLAPSYTENRVDAWGKVEFADNSVLQARNLVDKTVDEIINTPEILNSFFRFTPAFEDQKATLVATKQSDTSLSVSPRIQFLDGNFYDLNSTIAGVPLNIGFPSRVFAGFAALPAWVIPVSVGSSVGILFILLVLGLGIGIPMYRVRKLQDASFVNVFKKVDTLTTAVGSVYKKIITQTGVVKKAPSALKAANPSVKKPAAFLKPPVQPPSKPEGEQKAVEVKSEETKS.

An N-terminal signal peptide occupies residues Met1–Ala25. Disordered regions lie at residues Ser162 to Leu207 and Glu224 to Ser261. Basic and acidic residues predominate over residues Ala164–His175. Over residues Gly179–Leu207 the composition is skewed to polar residues. Residues Val946 to Pro966 traverse the membrane as a helical segment. Residues Ala1024–Ser1053 form a disordered region. A compositionally biased stretch (basic and acidic residues) spans Pro1037–Ser1053.

The protein localises to the cell membrane. The chain is Mgp-operon protein 3 from Mycoplasma genitalium (strain ATCC 33530 / DSM 19775 / NCTC 10195 / G37) (Mycoplasmoides genitalium).